Consider the following 514-residue polypeptide: ATP synthase subunit alpha (514 aa).

Residue 170–177 (GDRQTGKT) coordinates ATP.

The protein belongs to the ATPase alpha/beta chains family. As to quaternary structure, F-type ATPases have 2 components, CF(1) - the catalytic core - and CF(0) - the membrane proton channel. CF(1) has five subunits: alpha(3), beta(3), gamma(1), delta(1), epsilon(1). CF(0) has three main subunits: a(1), b(2) and c(9-12). The alpha and beta chains form an alternating ring which encloses part of the gamma chain. CF(1) is attached to CF(0) by a central stalk formed by the gamma and epsilon chains, while a peripheral stalk is formed by the delta and b chains.

Its subcellular location is the cell inner membrane. It carries out the reaction ATP + H2O + 4 H(+)(in) = ADP + phosphate + 5 H(+)(out). Produces ATP from ADP in the presence of a proton gradient across the membrane. The alpha chain is a regulatory subunit. This Acidithiobacillus ferridurans protein is ATP synthase subunit alpha.